The chain runs to 36 residues: Protein YmgL (36 aa).

In Escherichia coli (strain K12), this protein is Protein YmgL.